The sequence spans 591 residues: Dolichyl-phosphooligosaccharide-protein glycotransferase 1 (591 aa).

Topologically, residues 1-5 are cytoplasmic; it reads MDRKV. A helical transmembrane segment spans residues 6 to 26; it reads LMLAVILFALAVRFQNFGEIF. At 27 to 67 the chain is on the extracellular side; the sequence is DSGIYYTGYDSYYHMRLVEVMVKESFRPDYDYYINYPFGLK. The DXD motif 1 motif lies at 34–36; that stretch reads GYD. Residue Asp-36 coordinates Mn(2+). A helical transmembrane segment spans residues 68–88; sequence ITWPPLFDYILAFPGMLFGFH. Over 89 to 91 the chain is Cytoplasmic; it reads SSE. Residues 92–112 traverse the membrane as a helical segment; sequence IFAVFLPVILGVLSVVLICLT. Over 113 to 121 the chain is Extracellular; it reads ALQIVNNQT. A helical transmembrane segment spans residues 122–142; that stretch reads FALISAFIYAAAPVAVWKTVL. At 143-147 the chain is on the cytoplasmic side; it reads GQADH. Asp-146 contributes to the Mn(2+) binding site. Residues 146–148 carry the DXD motif 2 motif; that stretch reads DHH. His-147 is an a glycophospholipid binding site. His-148 is a Mn(2+) binding site. The helical transmembrane segment at 148 to 168 threads the bilayer; it reads HALVIFLFLLSAYLLLKDGVW. Position 169 (Lys-169) is a topological domain, extracellular. A helical transmembrane segment spans residues 170–190; that stretch reads ILAGLPMLFMALAWLGSPIYG. Over 191–219 the chain is Cytoplasmic; sequence ALLAFSALVHFDRKALRLVAASYLIPAIS. The helical transmembrane segment at 220–240 threads the bilayer; the sequence is FVLYPPVGISFFGLAAFLFVG. Residues 241–252 lie on the Extracellular side of the membrane; sequence SVVKGYEDRFRN. The chain crosses the membrane as a helical span at residues 253–273; sequence ATIYYIALSLATVLIIYFIPL. Topologically, residues 274–275 are cytoplasmic; that stretch reads PH. Residues 276–296 traverse the membrane as a helical segment; the sequence is FEFVKGGINYIFGANIYLPTI. The TIXE motif motif lies at 295-298; it reads TISE. At 297–303 the chain is on the extracellular side; it reads SEARSLQ. A helical membrane pass occupies residues 304 to 324; that stretch reads IFEIISASGYIYFIFALISVL. The Cytoplasmic segment spans residues 325–327; it reads FFR. Residues 328 to 344 traverse the membrane as a helical segment; it reads NRFVLSMFFLSFILALM. The Extracellular segment spans residues 345–347; the sequence is QLR. A glycophospholipid is bound at residue Arg-347. A helical transmembrane segment spans residues 348–368; sequence FTEVLVVPSALLSAYLVSLVL. Over 369 to 408 the chain is Cytoplasmic; sequence ERLEYPVFEKADEEEKSRRRKRKDRKVKQKNAEVEWKDHA. A helical transmembrane segment spans residues 409–429; it reads VVAAFLVILAIPCIVVAVVPF. Topologically, residues 430-591 are extracellular; that stretch reads DLTEDWKEAL…DVKIFEVVGS (162 aa). The interval 465 to 467 is interacts with target acceptor peptide in protein substrate; sequence WWD. Positions 465–469 match the WWDYG motif motif; sequence WWDYG. Positions 521-535 match the DKi motif motif; that stretch reads EITMKDANNTKFPAI.

It belongs to the STT3 family. The cofactor is Mn(2+). Requires Mg(2+) as cofactor. Zn(2+) serves as cofactor.

The protein localises to the cell membrane. It catalyses the reaction an archaeal dolichyl phosphooligosaccharide + [protein]-L-asparagine = an archaeal dolichyl phosphate + a glycoprotein with the oligosaccharide chain attached by N-beta-D-glycosyl linkage to a protein L-asparagine.. Its pathway is protein modification; protein glycosylation. Functionally, oligosaccharyl transferase (OST) that catalyzes the initial transfer of a defined glycan (a GalNAc-linked heptasaccharide composed of 4 Hex, 3 dHex and a sulfate for A.fulgidus AglB-S) from the lipid carrier dolichol-monophosphate to an asparagine residue within an Asn-X-Ser/Thr consensus motif in nascent polypeptide chains, the first step in protein N-glycosylation. This is Dolichyl-phosphooligosaccharide-protein glycotransferase 1 (aglB1) from Archaeoglobus fulgidus (strain ATCC 49558 / DSM 4304 / JCM 9628 / NBRC 100126 / VC-16).